Reading from the N-terminus, the 379-residue chain is Succinate--CoA ligase [ADP-forming] subunit beta (379 aa).

In terms of domain architecture, ATP-grasp spans 9–235 (KEIAKNNGIP…GRELSEMEAI (227 aa)). ATP-binding residues include Lys45, Glu91, Ile94, and Glu99. Mg(2+)-binding residues include Asn191 and Asp205. Substrate contacts are provided by residues Asn255 and 312–314 (GIT).

Belongs to the succinate/malate CoA ligase beta subunit family. Heterotetramer of two alpha and two beta subunits. The cofactor is Mg(2+).

It carries out the reaction succinate + ATP + CoA = succinyl-CoA + ADP + phosphate. It catalyses the reaction GTP + succinate + CoA = succinyl-CoA + GDP + phosphate. Its pathway is carbohydrate metabolism; tricarboxylic acid cycle; succinate from succinyl-CoA (ligase route): step 1/1. Its function is as follows. Succinyl-CoA synthetase functions in the citric acid cycle (TCA), coupling the hydrolysis of succinyl-CoA to the synthesis of either ATP or GTP and thus represents the only step of substrate-level phosphorylation in the TCA. The beta subunit provides nucleotide specificity of the enzyme and binds the substrate succinate, while the binding sites for coenzyme A and phosphate are found in the alpha subunit. The protein is Succinate--CoA ligase [ADP-forming] subunit beta of Staphylothermus marinus (strain ATCC 43588 / DSM 3639 / JCM 9404 / F1).